The primary structure comprises 81 residues: Large ribosomal subunit protein bL31B (81 aa).

It belongs to the bacterial ribosomal protein bL31 family. Type B subfamily. In terms of assembly, part of the 50S ribosomal subunit.

In Listeria innocua serovar 6a (strain ATCC BAA-680 / CLIP 11262), this protein is Large ribosomal subunit protein bL31B.